The chain runs to 18141 residues: Titin (18141 aa).

A compositionally biased stretch (low complexity) spans 1–31 (MQRQNPNPYQQQNQQHQQVQQFSSQEYSHSS). The disordered stretch occupies residues 1-69 (MQRQNPNPYQ…QHHGGSIGGA (69 aa)). The segment covering 32–47 (QEQHQEQRISRTEQHV) has biased composition (basic and acidic residues). Positions 48–62 (QRSQVTTQRQVQQHH) are enriched in low complexity. 17 Ig-like domains span residues 86-177 (PPVF…VYIQ), 255-343 (PQIS…AVLA), 372-461 (PAFV…AQLN), 471-559 (PQFV…ARLY), 618-708 (PQFI…AILS), 751-842 (PQFI…SSIR), 890-981 (PQFK…AQLT), 1024-1115 (PRFL…ATMI), 1158-1249 (PVFV…ACVR), 1291-1381 (PQFT…CSVR), 1424-1515 (PRFL…VELQ), 1558-1643 (PVFT…EAIT), 1691-1781 (PVFT…ASLI), 1824-1917 (PVFV…LNVT), 1958-2050 (PQFG…VNVT), 2089-2180 (PIFL…CNVR), and 2222-2313 (PHFT…TNLR). Residues 236–266 (EQDSQLSQELDRNQGPAQAPQISQKPRSSKL) form a disordered region. A disulfide bridge links C393 with C445. 3 cysteine pairs are disulfide-bonded: C1312–C1365, C1446–C1499, and C1579–C1632. C1846 and C1899 form a disulfide bridge. A disulfide bridge links C2111 with C2164. Basic and acidic residues predominate over residues 2338 to 2347 (STAPHQRQEP). The tract at residues 2338–2357 (STAPHQRQEPETPGTRQRPV) is disordered. Ig-like domains follow at residues 2356-2449 (PVFT…MRVV), 2488-2581 (PIFT…MKVK), and 2622-2715 (PVFT…LKIE). A disordered region spans residues 2731 to 2750 (PRIGELEAPKEGRPEAPEPT). Over residues 2734 to 2746 (GELEAPKEGRPEA) the composition is skewed to basic and acidic residues. Ig-like domains follow at residues 2754 to 2844 (PVFI…GTLK), 2891 to 2983 (PPVW…TTIF), 3029 to 3116 (PRFT…AEIS), 3130 to 3221 (PRFT…TTLN), 3263 to 3354 (PKFI…ASLK), 3401 to 3494 (PVFT…MKIQ), 3539 to 3625 (PEFI…ATVS), 3676 to 3767 (PKFT…AKVT), and 3811 to 3901 (PKFT…ATVS). Cysteines 2775 and 2828 form a disulfide. A disulfide bridge links C3152 with C3205. Cystine bridges form between C3560-C3613, C3698-C3751, and C3832-C3885. The TPR 1 repeat unit spans residues 3910–3944 (LQNQVPRGMKRSDALTQMEATIKKYTSEVHLTEDD). Ig-like domains lie at 3954–4047 (PRFV…IKVS) and 4092–4181 (PVFV…LKVV). C3976 and C4029 form a disulfide bridge. A coiled-coil region spans residues 4204–4229 (AAYQKERQENELEKVFDERKQVLSEQ). Disordered regions lie at residues 4226–4254 (LSEQSSHTLKGVEHLKPKQYKPPTPDWQQ) and 4299–4336 (SSQAKGMAQSYEENLQEKTSTTEVQAAPPKGIAQPSES). Residues 4309–4322 (YEENLQEKTSTTEV) show a composition bias toward polar residues. Ig-like domains follow at residues 4394 to 4482 (PVFT…ANLV), 4497 to 4585 (PSFV…GDCI), 4604 to 4692 (PHIV…AQLK), and 4703 to 4791 (PTIT…AKLT). One copy of the TPR 2 repeat lies at 4403 to 4438 (CRVFENEQAKFEVEFEGEPNPTVKWYRESFPIQNSP). Residues C4625 and C4676 are joined by a disulfide bond. 8 disordered regions span residues 4803–4891 (RTID…DKGV), 5318–5368 (DELV…QPEP), 5413–5648 (RVIP…EVDA), 5667–5701 (IKKTKRPKSTKEVTEELFEEQPEEEISPEEEVPQK), 5718–5748 (KKTKKPKLTQQVTEEETPHEEIIKESEEVVQ), 5775–5982 (KEEE…QRLL), 6034–6350 (KRVK…MPVD), and 6364–6393 (EEEVVPTEETPEAKQKAHKKRTKRLKEASV). Over residues 4822–4841 (PESPHAFQPGQQPGQQFGQF) the composition is skewed to low complexity. The segment covering 4852–4863 (GRSRQKKPKVRS) has biased composition (basic residues). Composition is skewed to basic and acidic residues over residues 5344–5357 (QPQEKTFEEAHDEL), 5436–5447 (RPKEAVKAEEIQ), 5541–5552 (QKPDEQKQELPK), 5591–5621 (IEEKLDVAPTKTYEKAVDVLPDEPKVEEKPE), and 5633–5645 (PKSEPTEEVHPDE). The stretch at 5575 to 5613 (PVLWERKKKKPQPQDVIEEKLDVAPTKTYEKAVDVLPDE) is one TPR 3 repeat. A compositionally biased stretch (acidic residues) spans 5681–5697 (EELFEEQPEEEISPEEE). Composition is skewed to acidic residues over residues 5779–5792 (IPTEETVEEEETAE) and 5818–5860 (DVEE…QDEI). Basic residues predominate over residues 5865–5874 (RKVKKAKKPK). Over residues 5883–5904 (EIEEDQPEEEVLQEEIIGEQEE) the composition is skewed to acidic residues. Over residues 5910–5920 (RKVKSIKKPKK) the composition is skewed to basic residues. Basic and acidic residues predominate over residues 5921–5971 (VVTEKTVDQTEQPEKPEESQAEEVKETVTEEPKKPKPAPEEAKVEQVEKIS). The segment covering 6034–6043 (KRVKKKKPKT) has biased composition (basic residues). The span at 6049–6079 (ESTEEPAEETEEFEEEATQPEEVQPVEEIPE) shows a compositional bias: acidic residues. Composition is skewed to basic and acidic residues over residues 6081–6092 (PQVKEVADERKT), 6099–6133 (RKEEIIEKVEEVALKRVTRPKKELPQEATIEEVRL), 6141–6169 (IKPEEVKLEEVDLQHVEKKEDEIVQEEKR), 6195–6209 (EAEHIELEKQPKPEE), 6217–6234 (KRGEKKQPVEEVLEEKKW), and 6259–6268 (PIEEQQKPEK). Over residues 6281–6290 (PESEEEELEL) the composition is skewed to acidic residues. Basic and acidic residues predominate over residues 6291-6306 (EPLKLPEDKKPKEPKA). The span at 6307 to 6318 (KKEKKKKPKLKK) shows a compositional bias: basic residues. Composition is skewed to acidic residues over residues 6325 to 6349 (EVSEEVAEPFDEPIAEEDEVEEMPV) and 6364 to 6373 (EEEVVPTEET). Ig-like domains lie at 6536–6624 (PRIT…TNII), 6633–6728 (PQFT…NILS), 6741–6830 (PTVT…VVVS), 6841–6929 (PRFI…ATVN), 6942–7034 (PRFV…VKIQ), 7066–7151 (PKII…VAVT), and 7189–7279 (PSLL…FDIS). C6557 and C6608 form a disulfide bridge. Cysteines 6964 and 7016 form a disulfide. Residues 7621-7663 (KIQVQTKQIAQMNTKIKKHKKHKQQEQEVSETTIQCEQKETLA) adopt a coiled-coil conformation. 29 disordered regions span residues 7773 to 7793 (AKTAESSKELPSKIPKSVKAQ), 9414 to 9440 (EEDDKQPETTVTVEEVPYEEEKPEEIQ), 9485 to 9510 (EEDDKQPETTVTVEEVPYEEEKPEEI), 9556 to 9582 (EEDDKQPETTVTVEEVPYEEEKPEEIQ), 9627 to 9652 (EEDDKQPETTVTVEEVPYEEEKPEEI), 9698 to 9724 (EEDDKQPETTVTVEEVPYEEEKPEEIQ), 9769 to 9796 (EEDDKQPETTVTVEEVPYEEEKPEEIQE), 9838 to 9865 (TAEEDDKQPETTVTVEEVPYEEEKPEEI), 9911 to 9937 (EEDDKQPETTVTVEEVPYEEEKPEEIQ), 9982 to 10008 (EEDDKQPETTVTVEEVPYEEEKPEEIQ), 10053 to 10080 (EEDDKQPETTVTVEEVPYEEEKPEEIQE), 10125 to 10149 (ENDKQPETTVTVEEVPYEEEKPEEI), 10195 to 10220 (EEDDKQPKTTVTVEEVPYEEEKPEEI), 10266 to 10291 (EEDDKQPETTVTVEEVPYEEEKPEEI), 10337 to 10364 (EEDDKQPETTVTVEEVPYEEEKPEEIQE), 10408 to 10433 (EEDDKQPETTVTVEEVPYEEEKPEEI), 10479 to 10504 (EEDDKQPETTVTVEEVPYEEEKPEEI), 10550 to 10576 (EEDDKQPETTVTVEEVPYEEEKPEEIQ), 10621 to 10648 (EEDDKQPETTVTVEEVPYEEEKPEEIQE), 10692 to 10717 (EEDDKQPETTVTVEEVPYEEEKPEEI), 10763 to 10788 (EEDDKQPETTVTVEEVPYEEEKPEEI), 10834 to 10860 (EEDDKQPETTVTVEEVPYEEEKPEEIQ), 10905 to 10932 (EEDDKQPETTVTVEEVPYEEEKPEEIQE), 11047 to 11073 (EEDDKQPETTVTVEEVPYEEEKPEEIQ), 11118 to 11143 (EEDDKQPETTVTVEEVPYEEEKPEEI), 11189 to 11216 (EEDDKQPETTVTVEEVPYEEEKPEEIQE), 11260 to 11286 (EEDDKQPETTVTVEEVPYEEEKPEEIQ), 11679 to 11703 (EELDENKKPKKKTTKTRTFKKRGPD), and 11767 to 11795 (TEPEEASADALQKPTKDKTPKQKKTLETP). Positions 7774–7783 (KTAESSKELP) are enriched in basic and acidic residues. Acidic residues-rich tracts occupy residues 9429-9440 (VPYEEEKPEEIQ), 9500-9510 (VPYEEEKPEEI), 9571-9582 (VPYEEEKPEEIQ), 9642-9652 (VPYEEEKPEEI), 9713-9724 (VPYEEEKPEEIQ), 9784-9796 (VPYEEEKPEEIQE), 9855-9865 (VPYEEEKPEEI), 9926-9937 (VPYEEEKPEEIQ), 9997-10008 (VPYEEEKPEEIQ), 10068-10080 (VPYEEEKPEEIQE), 10139-10149 (VPYEEEKPEEI), 10210-10220 (VPYEEEKPEEI), 10281-10291 (VPYEEEKPEEI), 10352-10364 (VPYEEEKPEEIQE), 10423-10433 (VPYEEEKPEEI), 10494-10504 (VPYEEEKPEEI), 10565-10576 (VPYEEEKPEEIQ), 10636-10648 (VPYEEEKPEEIQE), 10707-10717 (VPYEEEKPEEI), 10778-10788 (VPYEEEKPEEI), 10849-10860 (VPYEEEKPEEIQ), 10920-10932 (VPYEEEKPEEIQE), 11062-11073 (VPYEEEKPEEIQ), 11133-11143 (VPYEEEKPEEI), 11204-11216 (VPYEEEKPEEIQE), and 11275-11286 (VPYEEEKPEEIQ). A compositionally biased stretch (basic residues) spans 11686-11699 (KPKKKTTKTRTFKK). Residues 11780–11792 (PTKDKTPKQKKTL) show a composition bias toward basic and acidic residues. Residues 11872 to 11905 (KTVLQPYQRTEMELPQRARRDSSFKQPVKLTPMK) form a TPR 4 repeat. Disordered regions lie at residues 12003 to 12201 (FKHS…ADTK), 12451 to 12471 (TLQVGVTEHEPTKKLKTKKPE), 12685 to 12767 (TVDD…LPGP), 12943 to 12971 (IDHENAEEAPKVLKSKVSEEKPKSKKEKS), 13131 to 13154 (IKKKKVSPKHGPKEQVFEITETRP), 13325 to 13349 (QSFESPEPTEGEAHETKTKTKKPKK), 13471 to 13492 (EEYEPTEMDSKKKPKKKVKSHN), 13554 to 13576 (EADKPIKQPTQDQPIKKEKPLKK), 13702 to 13792 (KVQK…KSPD), 13891 to 13914 (EEVQEKSKEAPEEKKAKTVRKAKK), 13951 to 13994 (MKRK…DEPK), 14073 to 14094 (TTVPTETPDQDQPSVKQKRTKK), 14109 to 14322 (EEEA…QVTT), 14354 to 14377 (EYEPEPVNQDEKPKEPKKKTRKVK), 14414 to 14448 (PLDSPIDVLDESPKEVQKKDKKSRSTKVPNEETPV), 14533 to 14566 (EPEIASPQSIEEHPEQSKEKLAPKPKKTVRKVKK), 14583 to 14720 (KVDL…SELP), and 14756 to 14789 (VEESQPIVEEVEDEEPQPATEETVEDVTKPKSKK). Basic and acidic residues-rich tracts occupy residues 12022-12035 (ESDHSDKSNKELLH), 12044-12054 (EKIETPDESRK), 12124-12134 (MERTSDIREES), 12183-12201 (LNLRKRQGERPDDDKADTK), 12457-12471 (TEHEPTKKLKTKKPE), and 12685-12709 (TVDDVRVPKDKKKKIDNQKKIKISE). The span at 12731-12741 (HDEDLQTDEYS) shows a compositional bias: acidic residues. Residues 12750-12760 (KSKKKSTKKQK) show a composition bias toward basic residues. Over residues 13141 to 13154 (GPKEQVFEITETRP) the composition is skewed to basic and acidic residues. Residues 13482-13492 (KKPKKKVKSHN) show a composition bias toward basic residues. One copy of the TPR 5 repeat lies at 13566–13599 (QPIKKEKPLKKKKDVEYPVSLEAFDHTVKVVSEP). Residues 13733–13747 (LVKEDLDQPIERALE) are compositionally biased toward basic and acidic residues. Residues 13771–13781 (PKPKKISKPKS) are compositionally biased toward basic residues. Composition is skewed to basic and acidic residues over residues 13893–13906 (VQEKSKEAPEEKKA) and 13975–13984 (EDKPVEKISE). Over residues 14221-14240 (TVEKPLEALHTDSDLEKPDV) the composition is skewed to basic and acidic residues. A compositionally biased stretch (low complexity) spans 14264–14274 (KISSEQPKQPS). Residues 14282–14294 (VTEHDLKPEEEKP) are compositionally biased toward basic and acidic residues. Basic and acidic residues predominate over residues 14542–14554 (IEEHPEQSKEKLA). A compositionally biased stretch (basic residues) spans 14555-14564 (PKPKKTVRKV). The span at 14583 to 14599 (KVDLEKYEKVEMPEKPV) shows a compositional bias: basic and acidic residues. Residues 14652–14662 (ETTVDTTDIPE) show a composition bias toward low complexity. Positions 14664–14683 (TPTQTAQPEDTATAQITPSA) are enriched in polar residues. The span at 14684–14697 (QEEKSTQDDTKDTI) shows a compositional bias: basic and acidic residues. A compositionally biased stretch (acidic residues) spans 14756 to 14771 (VEESQPIVEEVEDEEP). A TPR 6 repeat occupies 14904-14936 (IPKTTDIGAIKDNGELSRNIEEAEEILKFKPHK). 8 disordered regions span residues 14956 to 15208 (EKYI…VSVK), 15301 to 15329 (TRKKKPKPQQPEEFEVTLKEPKEEQIQPD), 15425 to 15448 (ISETQSIEEKPIEVAEEAPEETPK), 15578 to 15597 (IRVSESEPKPEEPSVEQFTV), 15697 to 15722 (EKPAEAIVEEEEPVVTEPIEEAPKPE), 15825 to 15876 (EEPK…VEEP), 15951 to 15973 (ESQPEAVEDKEVSLPKKKPKAPI), and 16181 to 16206 (QEEEYEEGEDIEEFVVSQQRKPKPLQ). 10 stretches are compositionally biased toward basic and acidic residues: residues 14967–14989 (EKTPYKKPEKAPKPEEKQEDVKL), 15024–15046 (ELKQKPKEVEIVEEQTKKPKDGE), 15069–15080 (QIEHPEIPEKVK), 15088–15097 (KPKDKSKSEP), 15109–15139 (PKEEEAIPEQDVKFRKPERDAPEETDSEIKL), 15169–15179 (IEDKAIDDEKK), 15189–15198 (QPKEQEIAKE), 15316–15325 (VTLKEPKEEQ), 15425–15437 (ISETQSIEEKPIE), and 15578–15589 (IRVSESEPKPEE). Residues 15703 to 15716 (IVEEEEPVVTEPIE) show a composition bias toward acidic residues. Basic and acidic residues predominate over residues 15951-15964 (ESQPEAVEDKEVSL). Over residues 16183-16193 (EEYEEGEDIEE) the composition is skewed to acidic residues. Residues 16409-16470 (ENLNIMYSIC…PAQYLMEPEE (62 aa)) enclose the SH3 domain. 9 consecutive Ig-like domains span residues 16501 to 16590 (PRFI…TELI), 16625 to 16719 (PTFS…ITLK), 16728 to 16811 (PQIL…ANLT), 16822 to 16916 (PPLF…VEVD), 16919 to 17001 (TFTK…STVE), 17007 to 17091 (PDFI…CELV), 17097 to 17180 (PEIV…AKLT), 17184 to 17270 (PLVD…TKLC), and 17277 to 17363 (PPVI…AEAS). A disulfide bridge connects residues C16940 and C16989. The 94-residue stretch at 17374–17467 (APGTPQPLEI…LSPPIRLVPK (94 aa)) folds into the Fibronectin type-III 1 domain. 2 consecutive Ig-like domains span residues 17473–17558 (PSVQ…CRLK) and 17563–17653 (PVLE…CTVQ). C17494 and C17542 are joined by a disulfide. 4 Fibronectin type-III domains span residues 17660–17755 (RPQS…TKKF), 17760–17861 (PPRG…TPPS), 17862–17958 (PPQN…THAS), and 17982–18078 (PPTG…AMTA). A TPR 7 repeat occupies 17694–17728 (LEKCDVQNNVWMKVSDFNKDIKSYAVQKLSMNAQY). The segment at 17741-17771 (SEPTESDPVTITKKFEKPSPPRGPTTVSGMN) is disordered.

This sequence belongs to the protein kinase superfamily. CAMK Ser/Thr protein kinase family. Interacts with Msp300; this interaction mediates the recruitment of Msp300 to the Z-disks. As to expression, expressed in the mesoderm at stage 11, several hours before myoblast fusion, and persists in most muscle cells, somatic, visceral and pharyngeal muscles and their precursors, until the third instar. Isoform A: Expressed in the indirect flight muscle (at protein level).

The protein resides in the cytoplasm. Its subcellular location is the nucleus. It localises to the chromosome. The protein localises to the myofibril. It is found in the sarcomere. The protein resides in the z line. Functionally, key component in the assembly and functioning of adult and embryonic striated muscles and muscle tendons. By providing connections at the level of individual microfilaments, it contributes to the fine balance of forces between the two halves of the sarcomere. The size and extensibility of the cross-links are the main determinants of sarcomere extensibility properties of muscle. In non-muscle cells, seems to play a role in chromosome condensation and chromosome segregation during mitosis. Might link the lamina network to chromatin or nuclear actin, or both during interphase. In Drosophila melanogaster (Fruit fly), this protein is Titin (sls).